The primary structure comprises 429 residues: MKSATKSKILCIHGYAESGELFSVKLRALRERMADSVDFYFPTGPIELDKAKDELNGSGFDALSTVFSSSPASHRRGWWRINEYADTKQLEPTKAFEYLASYIKEHGPFDGILGFSQGTNLAANLAALVTIPKYQEYFSQPPFRFALFFSGYFRPLLMDGAVHATKLDLPTLHLLGKYDTVLSTETSTTLVRACKDAQVLFHPAAHQIPAPHAYVEPAADFIDFFSREDWPIISKHISLIVPTKKVNTTSAQTSLNNVEHDLISKIMSRSFKGGINVVVSDLQMFNEYKRIFGPKVLSLVVTDGQEPDTYSENVHYTPNFKGALAYLEAYQNSIGRIYVIGDKKLLTLGMLCRCTKRIIAITDAEDKFISQSSAQQVSGSLPFLEHSKEWLKAKSSQIRQWTGQSRLKHMSQDNSGEPVTMKLQMWERL.

Residues Ser-116, Asp-179, and His-206 each act as charge relay system in the active site.

It belongs to the AB hydrolase 3 family.

It is found in the cytoplasm. Its subcellular location is the nucleus. This is an uncharacterized protein from Schizosaccharomyces pombe (strain 972 / ATCC 24843) (Fission yeast).